The primary structure comprises 398 residues: GTP cyclohydrolase-2 (398 aa).

A unknown region spans residues 1-172; the sequence is MNTPTHTHPH…TAAAGASTTE (172 aa). The tract at residues 173–398 is GTP cyclohydrolase II; the sequence is YELVTRTPVP…VKSIPKTGHA (226 aa). Residue 220-224 coordinates GTP; the sequence is RVHSS. Residues Cys-225, Cys-236, and Cys-238 each contribute to the Zn(2+) site. Residues Gln-241, 263–265, and Thr-285 each bind GTP; that span reads EGR. Catalysis depends on Asp-297, which acts as the Proton acceptor. The active-site Nucleophile is the Arg-299. GTP contacts are provided by Ser-320 and Lys-325. The interval 375–398 is disordered; sequence QRPQDPSETVDGETVKSIPKTGHA.

This sequence in the C-terminal section; belongs to the GTP cyclohydrolase II family. Zn(2+) serves as cofactor.

It carries out the reaction GTP + 4 H2O = 2,5-diamino-6-hydroxy-4-(5-phosphoribosylamino)-pyrimidine + formate + 2 phosphate + 3 H(+). It functions in the pathway cofactor biosynthesis; riboflavin biosynthesis; 5-amino-6-(D-ribitylamino)uracil from GTP: step 1/4. Its function is as follows. Catalyzes the conversion of GTP to 2,5-diamino-6-ribosylamino-4(3H)-pyrimidinone 5'-phosphate (DARP), formate and pyrophosphate. In Xylella fastidiosa (strain 9a5c), this protein is GTP cyclohydrolase-2 (ribA).